A 108-amino-acid chain; its full sequence is MAVWIQAGALLFLLAVSSVNANAGAPQHLCGSHLVDALYLVCGPTGFFYNPKRDVDPPLGFLPPKSAQETEVADFAFKDHAEVIRKRGIVEQCCHKPCSIFELQNYCN.

Residues 1–21 form the signal peptide; that stretch reads MAVWIQAGALLFLLAVSSVNA. 3 disulfide bridges follow: Cys30–Cys94, Cys42–Cys107, and Cys93–Cys98. A propeptide spans 54 to 85 (c peptide); that stretch reads DVDPPLGFLPPKSAQETEVADFAFKDHAEVIR.

This sequence belongs to the insulin family. Heterodimer of a B chain and an A chain linked by two disulfide bonds.

The protein localises to the secreted. Functionally, insulin decreases blood glucose concentration. It increases cell permeability to monosaccharides, amino acids and fatty acids. It accelerates glycolysis, the pentose phosphate cycle, and glycogen synthesis in liver. The sequence is that of Insulin (ins) from Cyprinus carpio (Common carp).